Consider the following 356-residue polypeptide: Nucleotide-binding protein GDI1189/Gdia_1902 (356 aa).

Residue Gly-20–Ser-27 coordinates ATP. GTP is bound at residue Asp-65 to Thr-68. A disordered region spans residues Glu-285–Ala-313.

It belongs to the RapZ-like family.

Its function is as follows. Displays ATPase and GTPase activities. This Gluconacetobacter diazotrophicus (strain ATCC 49037 / DSM 5601 / CCUG 37298 / CIP 103539 / LMG 7603 / PAl5) protein is Nucleotide-binding protein GDI1189/Gdia_1902.